The following is a 561-amino-acid chain: Cytochrome P450 monooxygenase iboC (561 aa).

The chain crosses the membrane as a helical span at residues 8–28; that stretch reads RFYYQLLAAVLIPALFVAWAA. Residue cysteine 484 participates in heme binding.

The protein belongs to the cytochrome P450 family. It depends on heme as a cofactor.

It localises to the membrane. It participates in secondary metabolite biosynthesis. Its function is as follows. Cytochrome P450 monooxygenase; part of the gene cluster that mediates the biosynthesis of the psychoactive metabolites ibotenic acid and muscimol. The first committed step is glutamate hydroxylation by the 2-oxoglutarate-dependent dioxygenase iboH, and the last step is decarboxylation of ibotenic acid to muscimol by the decarboxylase iboD. The order of the intermediate reactions is somewhat ambiguous. IboA likely activates the carboxylic acid at position 5 to introduce an amide bond, and the flavin monooxygenase iboF generates the N-O bond. There are several options for the latter step. One option is that iboF directly hydroxylates the amide nitrogen formed by iboA to produce a hydroxamic acid species. Another option is that iboF hydroxylates an external N-containing compound, whose resulting N-O bond is subsequently introduced into the hydroxyglutamate scaffold. The paralogous PLP-dependent cystathionine gamma-synthase-like enzymes iboG1 and iboG2 are likely involved in substitution of the OH group at position 3 by the O-N moiety. The first cyclic intermediate is most probably tricholomic acid which is likely desaturated to ibotenic acid by the cytochrome P450 monooxygenase iboC. The polypeptide is Cytochrome P450 monooxygenase iboC (Amanita muscaria (strain Koide BX008)).